The chain runs to 830 residues: Venom phosphodiesterase (830 aa).

SMB domains lie at 7–50 (PLES…VLPT) and 51–95 (QSWS…RETS). Disulfide bonds link Cys11-Cys15, Cys11-Cys28, Cys15-Cys46, Cys26-Cys28, Cys26-Cys39, Cys32-Cys38, Cys39-Cys46, Cys55-Cys60, Cys55-Cys72, Cys60-Cys90, Cys70-Cys72, Cys70-Cys83, Cys76-Cys82, Cys83-Cys90, Cys101-Cys147, and Cys109-Cys321. An N-linked (GlcNAc...) asparagine glycan is attached at Asn16. Positions 35–37 (RKA) match the Cell attachment site motif. Positions 124 and 162 each coordinate a divalent metal cation. The active-site AMP-threonine intermediate is the Thr162. N-linked (GlcNAc...) asparagine glycans are attached at residues Asn193, Asn236, and Asn247. An AMP-binding site is contributed by Lys248. 4 residues coordinate a divalent metal cation: Asp282, His286, Asp329, and His330. Residue His286 coordinates AMP. Intrachain disulfides connect Cys337–Cys434, Cys385–Cys772, Cys518–Cys575, Cys531–Cys632, Cys533–Cys617, and Cys740–Cys750. His439 contributes to the a divalent metal cation binding site. The N-linked (GlcNAc...) asparagine glycan is linked to Asn489. N-linked (GlcNAc...) asparagine glycans are attached at residues Asn723 and Asn742.

The protein belongs to the nucleotide pyrophosphatase/phosphodiesterase family. In terms of assembly, monomer cleaved in two subunits; disulfide-linked. Is synthesized as a single-chain protein and is subsequently cleaved to form a two-subunit protein held together with disulfide bonds. It depends on a divalent metal cation as a cofactor. As to expression, expressed by venom gland.

The protein resides in the secreted. The catalysed reaction is ADP + H2O = AMP + phosphate + H(+). Hydrolyzes ADP with high activity. Shows weak or no activity on 5'-AMP, 5'-GMP, 3'-AMP, ATP, cAMP, and cGMP. Is devoid of monophosphatase and proteinase activities. Dose-dependently inhibits platelet aggregation induced by ADP and collagen. The polypeptide is Venom phosphodiesterase (Naja atra (Chinese cobra)).